Consider the following 177-residue polypeptide: MQVEVQSLSLEECPWRLPGPQCECEALLPSGARRRIDLRLSGRAVAVWVHVRGGPGQFNLSYATGRHKKPNPHQNMNRGMEFIAPVSAPTKSGAPWHFLSQGPTDAQRAVRIRPGTRMGLSSDPVVGTLSSSYLDLLTLSYKPGRTVTSSYLNVRGHEVRKLQNSVEATRISRTDSS.

This is an uncharacterized protein from Homo sapiens (Human).